The sequence spans 202 residues: N-(5'-phosphoribosyl)anthranilate isomerase (202 aa).

Belongs to the TrpF family.

The enzyme catalyses N-(5-phospho-beta-D-ribosyl)anthranilate = 1-(2-carboxyphenylamino)-1-deoxy-D-ribulose 5-phosphate. Its pathway is amino-acid biosynthesis; L-tryptophan biosynthesis; L-tryptophan from chorismate: step 3/5. The protein is N-(5'-phosphoribosyl)anthranilate isomerase of Listeria monocytogenes serotype 4b (strain CLIP80459).